A 152-amino-acid polypeptide reads, in one-letter code: Methylglyoxal synthase (152 aa).

The region spanning 6-152 (RKISARKSIA…YDGYLAERLA (147 aa)) is the MGS-like domain. Substrate is bound by residues His19, Lys23, 45 to 48 (TGTT), and 65 to 66 (SG). Asp71 (proton donor/acceptor) is an active-site residue. His98 serves as a coordination point for substrate.

It belongs to the methylglyoxal synthase family.

The enzyme catalyses dihydroxyacetone phosphate = methylglyoxal + phosphate. Its function is as follows. Catalyzes the formation of methylglyoxal from dihydroxyacetone phosphate. In Actinobacillus pleuropneumoniae serotype 3 (strain JL03), this protein is Methylglyoxal synthase.